A 65-amino-acid chain; its full sequence is Large ribosomal subunit protein bL35 (65 aa).

Residues 1-26 (MPKMKTNRASAKRFKKTASGGFKAGQ) form a disordered region.

The protein belongs to the bacterial ribosomal protein bL35 family.

This chain is Large ribosomal subunit protein bL35, found in Oenococcus oeni (strain ATCC BAA-331 / PSU-1).